Reading from the N-terminus, the 247-residue chain is Cell division protein ZapD (247 aa).

It belongs to the ZapD family. As to quaternary structure, interacts with FtsZ.

The protein resides in the cytoplasm. Its function is as follows. Cell division factor that enhances FtsZ-ring assembly. Directly interacts with FtsZ and promotes bundling of FtsZ protofilaments, with a reduction in FtsZ GTPase activity. This chain is Cell division protein ZapD, found in Cronobacter sakazakii (strain ATCC BAA-894) (Enterobacter sakazakii).